We begin with the raw amino-acid sequence, 56 residues long: Ovomucoid (56 aa).

The Kazal-like domain occupies 6–56 (VDCSEYPKPECTAEERPICGSDNKTYGNKCNFCNAVVESNGTLTLRNFGKC). Intrachain disulfides connect cysteine 8/cysteine 38, cysteine 16/cysteine 35, and cysteine 24/cysteine 56. A glycan (N-linked (GlcNAc...) asparagine) is linked at asparagine 45.

The protein resides in the secreted. This chain is Ovomucoid, found in Bambusicola thoracicus (Chinese bamboo-partridge).